A 205-amino-acid polypeptide reads, in one-letter code: Outer-membrane lipoprotein carrier protein (205 aa).

The N-terminal stretch at 1-22 (MKKIVIVISILLTSFLSSAVSA) is a signal peptide.

It belongs to the LolA family. As to quaternary structure, monomer.

It localises to the periplasm. In terms of biological role, participates in the translocation of lipoproteins from the inner membrane to the outer membrane. Only forms a complex with a lipoprotein if the residue after the N-terminal Cys is not an aspartate (The Asp acts as a targeting signal to indicate that the lipoprotein should stay in the inner membrane). The polypeptide is Outer-membrane lipoprotein carrier protein (Psychromonas ingrahamii (strain DSM 17664 / CCUG 51855 / 37)).